The chain runs to 196 residues: Imidazole glycerol phosphate synthase subunit HisH (196 aa).

The Glutamine amidotransferase type-1 domain maps to 2 to 196 (KVAVIKYNAG…ERIIKNFLEL (195 aa)). The active-site Nucleophile is the Cys77. Active-site residues include His178 and Glu180.

As to quaternary structure, heterodimer of HisH and HisF.

It localises to the cytoplasm. The enzyme catalyses 5-[(5-phospho-1-deoxy-D-ribulos-1-ylimino)methylamino]-1-(5-phospho-beta-D-ribosyl)imidazole-4-carboxamide + L-glutamine = D-erythro-1-(imidazol-4-yl)glycerol 3-phosphate + 5-amino-1-(5-phospho-beta-D-ribosyl)imidazole-4-carboxamide + L-glutamate + H(+). It carries out the reaction L-glutamine + H2O = L-glutamate + NH4(+). It participates in amino-acid biosynthesis; L-histidine biosynthesis; L-histidine from 5-phospho-alpha-D-ribose 1-diphosphate: step 5/9. In terms of biological role, IGPS catalyzes the conversion of PRFAR and glutamine to IGP, AICAR and glutamate. The HisH subunit catalyzes the hydrolysis of glutamine to glutamate and ammonia as part of the synthesis of IGP and AICAR. The resulting ammonia molecule is channeled to the active site of HisF. The polypeptide is Imidazole glycerol phosphate synthase subunit HisH (Bacteroides fragilis (strain ATCC 25285 / DSM 2151 / CCUG 4856 / JCM 11019 / LMG 10263 / NCTC 9343 / Onslow / VPI 2553 / EN-2)).